A 283-amino-acid chain; its full sequence is Bifunctional protein FolD 1 (283 aa).

NADP(+)-binding positions include 166-168 (GRS) and I232.

This sequence belongs to the tetrahydrofolate dehydrogenase/cyclohydrolase family. Homodimer.

The enzyme catalyses (6R)-5,10-methylene-5,6,7,8-tetrahydrofolate + NADP(+) = (6R)-5,10-methenyltetrahydrofolate + NADPH. The catalysed reaction is (6R)-5,10-methenyltetrahydrofolate + H2O = (6R)-10-formyltetrahydrofolate + H(+). It participates in one-carbon metabolism; tetrahydrofolate interconversion. In terms of biological role, catalyzes the oxidation of 5,10-methylenetetrahydrofolate to 5,10-methenyltetrahydrofolate and then the hydrolysis of 5,10-methenyltetrahydrofolate to 10-formyltetrahydrofolate. The polypeptide is Bifunctional protein FolD 1 (Lactobacillus johnsonii (strain CNCM I-12250 / La1 / NCC 533)).